We begin with the raw amino-acid sequence, 569 residues long: Glucose-6-phosphate isomerase, cytosolic 1A (569 aa).

Glu360 acts as the Proton donor in catalysis. Catalysis depends on residues His391 and Lys516.

It belongs to the GPI family. In terms of assembly, homodimer.

The protein localises to the cytoplasm. It carries out the reaction alpha-D-glucose 6-phosphate = beta-D-fructose 6-phosphate. Its pathway is carbohydrate degradation; glycolysis; D-glyceraldehyde 3-phosphate and glycerone phosphate from D-glucose: step 2/4. This chain is Glucose-6-phosphate isomerase, cytosolic 1A (PGIC1-A), found in Clarkia lewisii (Farewell-to-spring).